The chain runs to 140 residues: Nucleoside diphosphate kinase (140 aa).

Residues lysine 11, phenylalanine 59, arginine 87, threonine 93, arginine 104, and asparagine 114 each contribute to the ATP site. Histidine 117 (pros-phosphohistidine intermediate) is an active-site residue.

The protein belongs to the NDK family. As to quaternary structure, homotetramer. Mg(2+) serves as cofactor.

It is found in the cytoplasm. It catalyses the reaction a 2'-deoxyribonucleoside 5'-diphosphate + ATP = a 2'-deoxyribonucleoside 5'-triphosphate + ADP. It carries out the reaction a ribonucleoside 5'-diphosphate + ATP = a ribonucleoside 5'-triphosphate + ADP. In terms of biological role, major role in the synthesis of nucleoside triphosphates other than ATP. The ATP gamma phosphate is transferred to the NDP beta phosphate via a ping-pong mechanism, using a phosphorylated active-site intermediate. This chain is Nucleoside diphosphate kinase, found in Rhizobium meliloti (strain 1021) (Ensifer meliloti).